The chain runs to 337 residues: Glycerol-3-phosphate dehydrogenase [NAD(P)+] (337 aa).

2 residues coordinate NADPH: Trp12 and Lys107. Residues Lys107, Gly138, and Thr140 each contribute to the sn-glycerol 3-phosphate site. An NADPH-binding site is contributed by Ala142. Residues Lys193, Asp246, Ser256, Arg257, and Asn258 each coordinate sn-glycerol 3-phosphate. Lys193 serves as the catalytic Proton acceptor. Residue Arg257 participates in NADPH binding. NADPH contacts are provided by Val282 and Glu284.

Belongs to the NAD-dependent glycerol-3-phosphate dehydrogenase family.

The protein localises to the cytoplasm. It catalyses the reaction sn-glycerol 3-phosphate + NAD(+) = dihydroxyacetone phosphate + NADH + H(+). The enzyme catalyses sn-glycerol 3-phosphate + NADP(+) = dihydroxyacetone phosphate + NADPH + H(+). It participates in membrane lipid metabolism; glycerophospholipid metabolism. Functionally, catalyzes the reduction of the glycolytic intermediate dihydroxyacetone phosphate (DHAP) to sn-glycerol 3-phosphate (G3P), the key precursor for phospholipid synthesis. This is Glycerol-3-phosphate dehydrogenase [NAD(P)+] from Koribacter versatilis (strain Ellin345).